The following is a 44-amino-acid chain: uncharacterized protein (44 aa).

This is an uncharacterized protein from Saccharomyces cerevisiae (strain ATCC 204508 / S288c) (Baker's yeast).